The chain runs to 200 residues: Imidazoleglycerol-phosphate dehydratase (200 aa).

This sequence belongs to the imidazoleglycerol-phosphate dehydratase family.

It is found in the cytoplasm. The enzyme catalyses D-erythro-1-(imidazol-4-yl)glycerol 3-phosphate = 3-(imidazol-4-yl)-2-oxopropyl phosphate + H2O. Its pathway is amino-acid biosynthesis; L-histidine biosynthesis; L-histidine from 5-phospho-alpha-D-ribose 1-diphosphate: step 6/9. The chain is Imidazoleglycerol-phosphate dehydratase from Chlorobium limicola (strain DSM 245 / NBRC 103803 / 6330).